Consider the following 71-residue polypeptide: Small ribosomal subunit protein bS21 (71 aa).

This sequence belongs to the bacterial ribosomal protein bS21 family.

This Nitrosococcus oceani (strain ATCC 19707 / BCRC 17464 / JCM 30415 / NCIMB 11848 / C-107) protein is Small ribosomal subunit protein bS21.